Here is a 1416-residue protein sequence, read N- to C-terminus: Telomere-associated protein RIF1 (1416 aa).

Disordered regions lie at residues 789 to 858 (PIRK…PVVQ), 886 to 984 (PEVA…HLTG), 1021 to 1054 (ARAQDRAEQVSTPTSELNELTGTDHTSTPIQAPP), and 1166 to 1186 (TARTATTDKSLDKSTGEAPEE). A compositionally biased stretch (low complexity) spans 928–945 (GSSGDPAASAGAVAAGEM). Polar residues predominate over residues 1029 to 1050 (QVSTPTSELNELTGTDHTSTPI).

Belongs to the RIF1 family. Highly divergent. In terms of assembly, interacts with Pp1-87b. Interacts with SuUR (via SNF2-like region). Post-translationally, phosphorylated, probably by Cdk1; phosphorylation regulates dissociation from heterochromatin. As to expression, expressed in nurse cells and follicle cells in the adult female (at protein level). Detected in adult at extremely low levels.

The protein localises to the nucleus. It localises to the chromosome. It is found in the telomere. Functionally, regulates the timing of initiation of DNA replication. Functions in copy number control by promoting the underreplication of DNA, which is found in many late replicating euchromatic regions of salivary gland polytene chromosomes. Promotes underreplication by localizing to active DNA replication forks in a partially SuUR-dependent manner, and inhibiting replication fork progression. Might also work as an adapter to recruit Pp1-87B to multiple sites on the chromosome and may function with Pp1-87B to mediate underreplication. Plays an essential role in embryonic development, in the transition from larvae to pupae and, probably, in proliferating tissues later on. In embryos, during mid-blastula transition, binds to and selectively delays the replication of large blocks of repetitive DNA satellite sequences during S phase in response to the activity of Cdk1; maternal Rif1 is specifically required for the normal extension of S phase 14. Unlike mammalian orthologs, does not appear to play a role in DNA damage repair. The sequence is that of Telomere-associated protein RIF1 from Drosophila melanogaster (Fruit fly).